The following is a 320-amino-acid chain: Malate dehydrogenase (320 aa).

NAD(+) is bound by residues 10–15 (GAGQIG) and aspartate 34. 2 residues coordinate substrate: arginine 83 and arginine 89. NAD(+)-binding positions include asparagine 96 and 119-121 (ITN). The substrate site is built by asparagine 121 and arginine 152. Residue histidine 176 is the Proton acceptor of the active site.

This sequence belongs to the LDH/MDH superfamily. MDH type 3 family.

The catalysed reaction is (S)-malate + NAD(+) = oxaloacetate + NADH + H(+). Functionally, catalyzes the reversible oxidation of malate to oxaloacetate. In Methylorubrum populi (strain ATCC BAA-705 / NCIMB 13946 / BJ001) (Methylobacterium populi), this protein is Malate dehydrogenase.